We begin with the raw amino-acid sequence, 465 residues long: Eukaryotic translation initiation factor 3 subunit M (465 aa).

The region spanning 215–383 is the PCI domain; sequence EEMSYNHVIL…GEFLVHRATY (169 aa). The tract at residues 429-465 is disordered; it reads AAAESGREGGARGGAGERRRGGGGHQGPREVDLVGGD. Basic and acidic residues-rich tracts occupy residues 433–448 and 455–465; these read SGRE…ERRR and GPREVDLVGGD.

The protein belongs to the eIF-3 subunit M family. Component of the eukaryotic translation initiation factor 3 (eIF-3) complex.

The protein localises to the cytoplasm. Its function is as follows. Component of the eukaryotic translation initiation factor 3 (eIF-3) complex, which is involved in protein synthesis of a specialized repertoire of mRNAs and, together with other initiation factors, stimulates binding of mRNA and methionyl-tRNAi to the 40S ribosome. The eIF-3 complex specifically targets and initiates translation of a subset of mRNAs involved in cell proliferation. In Coccidioides immitis (strain RS) (Valley fever fungus), this protein is Eukaryotic translation initiation factor 3 subunit M.